The primary structure comprises 703 residues: UvrABC system protein B (703 aa).

The 158-residue stretch at 33 to 190 folds into the Helicase ATP-binding domain; the sequence is TRIENGENDV…RRFVAMQYKR (158 aa). 46 to 53 lines the ATP pocket; sequence GATGTGKT. The Beta-hairpin motif lies at 99 to 122; that stretch reads YYDYYQPEAYIPQTDTYIEKDSNI. A Helicase C-terminal domain is found at 436–589; it reads QIDDLLAEIK…QIAYNQEHGI (154 aa). Positions 659–694 constitute a UVR domain; the sequence is ADLIRQLSEQMHTAAEQLQFELAARLRDEIRDLKKE.

This sequence belongs to the UvrB family. Forms a heterotetramer with UvrA during the search for lesions. Interacts with UvrC in an incision complex.

The protein localises to the cytoplasm. Functionally, the UvrABC repair system catalyzes the recognition and processing of DNA lesions. A damage recognition complex composed of 2 UvrA and 2 UvrB subunits scans DNA for abnormalities. Upon binding of the UvrA(2)B(2) complex to a putative damaged site, the DNA wraps around one UvrB monomer. DNA wrap is dependent on ATP binding by UvrB and probably causes local melting of the DNA helix, facilitating insertion of UvrB beta-hairpin between the DNA strands. Then UvrB probes one DNA strand for the presence of a lesion. If a lesion is found the UvrA subunits dissociate and the UvrB-DNA preincision complex is formed. This complex is subsequently bound by UvrC and the second UvrB is released. If no lesion is found, the DNA wraps around the other UvrB subunit that will check the other stand for damage. The polypeptide is UvrABC system protein B (Bifidobacterium longum subsp. infantis (strain ATCC 15697 / DSM 20088 / JCM 1222 / NCTC 11817 / S12)).